A 414-amino-acid chain; its full sequence is Pre-mRNA-processing protein 45 (414 aa).

2 disordered regions span residues 128–159 (ESKRQDPLQPSRQKNTSSKIVLPEDDETDTPI) and 264–292 (RSKIQTQSSAVKKRGSRFEGGRHQNKKIK). Residues 135-146 (LQPSRQKNTSSK) are compositionally biased toward polar residues.

This sequence belongs to the SNW family. Associated with the spliceosome.

The protein resides in the nucleus. In terms of biological role, involved in pre-mRNA splicing. This Candida glabrata (strain ATCC 2001 / BCRC 20586 / JCM 3761 / NBRC 0622 / NRRL Y-65 / CBS 138) (Yeast) protein is Pre-mRNA-processing protein 45 (PRP45).